The sequence spans 424 residues: Serine--tRNA ligase 1 (424 aa).

232 to 234 (TAE) serves as a coordination point for L-serine. ATP is bound at residue 263–265 (RSE). E286 serves as a coordination point for L-serine. 350–353 (EISS) provides a ligand contact to ATP. S386 serves as a coordination point for L-serine.

It belongs to the class-II aminoacyl-tRNA synthetase family. Type-1 seryl-tRNA synthetase subfamily. In terms of assembly, homodimer. The tRNA molecule binds across the dimer.

Its subcellular location is the cytoplasm. The catalysed reaction is tRNA(Ser) + L-serine + ATP = L-seryl-tRNA(Ser) + AMP + diphosphate + H(+). It catalyses the reaction tRNA(Sec) + L-serine + ATP = L-seryl-tRNA(Sec) + AMP + diphosphate + H(+). Its pathway is aminoacyl-tRNA biosynthesis; selenocysteinyl-tRNA(Sec) biosynthesis; L-seryl-tRNA(Sec) from L-serine and tRNA(Sec): step 1/1. Its function is as follows. Catalyzes the attachment of serine to tRNA(Ser). Is also able to aminoacylate tRNA(Sec) with serine, to form the misacylated tRNA L-seryl-tRNA(Sec), which will be further converted into selenocysteinyl-tRNA(Sec). The sequence is that of Serine--tRNA ligase 1 from Clostridium acetobutylicum (strain ATCC 824 / DSM 792 / JCM 1419 / IAM 19013 / LMG 5710 / NBRC 13948 / NRRL B-527 / VKM B-1787 / 2291 / W).